Here is a 487-residue protein sequence, read N- to C-terminus: ATP synthase subunit beta (487 aa).

171 to 178 (GGAGVGKT) contacts ATP.

This sequence belongs to the ATPase alpha/beta chains family. In terms of assembly, F-type ATPases have 2 components, CF(1) - the catalytic core - and CF(0) - the membrane proton channel. CF(1) has five subunits: alpha(3), beta(3), gamma(1), delta(1), epsilon(1). CF(0) has three main subunits: a(1), b(2) and c(9-12). The alpha and beta chains form an alternating ring which encloses part of the gamma chain. CF(1) is attached to CF(0) by a central stalk formed by the gamma and epsilon chains, while a peripheral stalk is formed by the delta and b chains.

Its subcellular location is the cell membrane. It catalyses the reaction ATP + H2O + 4 H(+)(in) = ADP + phosphate + 5 H(+)(out). Its function is as follows. Produces ATP from ADP in the presence of a proton gradient across the membrane. The catalytic sites are hosted primarily by the beta subunits. In Leifsonia xyli subsp. xyli (strain CTCB07), this protein is ATP synthase subunit beta.